The following is a 158-amino-acid chain: Transcriptional repressor NrdR (158 aa).

Residues C3–C34 fold into a zinc finger. The ATP-cone domain occupies L49 to D139.

Belongs to the NrdR family. The cofactor is Zn(2+).

Functionally, negatively regulates transcription of bacterial ribonucleotide reductase nrd genes and operons by binding to NrdR-boxes. This Brucella abortus (strain S19) protein is Transcriptional repressor NrdR.